Reading from the N-terminus, the 285-residue chain is uncharacterized protein (285 aa).

A disordered region spans residues 1-25; the sequence is MANQKKKTLPPQHQNQQPGFEYLMD. 45 to 69 serves as a coordination point for NADP(+); sequence IITGGDSGIGRAVSVLFAKEGANVV. Ser-177 is a binding site for substrate. The Proton acceptor role is filled by Tyr-190.

It belongs to the short-chain dehydrogenases/reductases (SDR) family.

This is an uncharacterized protein from Bacillus subtilis (strain 168).